Consider the following 307-residue polypeptide: Protease HtpX homolog (307 aa).

The chain crosses the membrane as a helical span at residues 16–36; that stretch reads LFMGVGYLIGGAAGAMIALVV. His130 serves as a coordination point for Zn(2+). Glu131 is a catalytic residue. Zn(2+) is bound at residue His134. The next 2 helical transmembrane spans lie at 145-165 and 172-192; these read ITAT…FFGG and GPGI…AMLV. Residue Glu201 coordinates Zn(2+). The disordered stretch occupies residues 278 to 307; the sequence is AGQSGSATPDPAPAPRGPWNGGAPRRGPWG.

It belongs to the peptidase M48B family. It depends on Zn(2+) as a cofactor.

It localises to the cell inner membrane. The polypeptide is Protease HtpX homolog (Nitrobacter hamburgensis (strain DSM 10229 / NCIMB 13809 / X14)).